The primary structure comprises 213 residues: ATP phosphoribosyltransferase (213 aa).

Belongs to the ATP phosphoribosyltransferase family. Short subfamily. As to quaternary structure, heteromultimer composed of HisG and HisZ subunits.

It is found in the cytoplasm. It carries out the reaction 1-(5-phospho-beta-D-ribosyl)-ATP + diphosphate = 5-phospho-alpha-D-ribose 1-diphosphate + ATP. Its pathway is amino-acid biosynthesis; L-histidine biosynthesis; L-histidine from 5-phospho-alpha-D-ribose 1-diphosphate: step 1/9. Catalyzes the condensation of ATP and 5-phosphoribose 1-diphosphate to form N'-(5'-phosphoribosyl)-ATP (PR-ATP). Has a crucial role in the pathway because the rate of histidine biosynthesis seems to be controlled primarily by regulation of HisG enzymatic activity. This chain is ATP phosphoribosyltransferase, found in Bacillus velezensis (strain DSM 23117 / BGSC 10A6 / LMG 26770 / FZB42) (Bacillus amyloliquefaciens subsp. plantarum).